We begin with the raw amino-acid sequence, 518 residues long: Apolipoprotein N-acyltransferase (518 aa).

The next 6 helical transmembrane spans lie at 22–42 (LAFI…LWII), 63–83 (FFHW…WVHV), 101–121 (ALLA…LAWF), 134–154 (LLFP…LTGF), 174–194 (IIGA…LALC), and 202–222 (LLIL…LSQI). Residues 234-484 (VQGNIPQSMK…TGVLSATIPL (251 aa)) enclose the CN hydrolase domain. Catalysis depends on Glu273, which acts as the Proton acceptor. Lys343 is an active-site residue. Residue Cys395 is the Nucleophile of the active site. Residues 492 to 512 (AKIGQTPLLILCGALLLVGFI) form a helical membrane-spanning segment.

The protein belongs to the CN hydrolase family. Apolipoprotein N-acyltransferase subfamily.

It is found in the cell inner membrane. It catalyses the reaction N-terminal S-1,2-diacyl-sn-glyceryl-L-cysteinyl-[lipoprotein] + a glycerophospholipid = N-acyl-S-1,2-diacyl-sn-glyceryl-L-cysteinyl-[lipoprotein] + a 2-acyl-sn-glycero-3-phospholipid + H(+). Its pathway is protein modification; lipoprotein biosynthesis (N-acyl transfer). Functionally, catalyzes the phospholipid dependent N-acylation of the N-terminal cysteine of apolipoprotein, the last step in lipoprotein maturation. This Shewanella oneidensis (strain ATCC 700550 / JCM 31522 / CIP 106686 / LMG 19005 / NCIMB 14063 / MR-1) protein is Apolipoprotein N-acyltransferase.